A 391-amino-acid polypeptide reads, in one-letter code: MARVGILLLNLGGPERIQDVGPFLYNLFADPEIIRLPNPILQKPLAWLISTLRSSKSQEAYRSIGGGSPLRRITEQQARELQSLLRQRGVDATSYVAMRYWHPFTESAVADIKADGIDEVVVLPLYPHFSISTSGSSFRELQRLRQMDERFEALPLRCIRSWYDHPGYVRSMAELIAEQVRASDDVEHAHIFFSAHGVPKSYVEEAGDPYQQEIEACAALIMAELETIVGHSNPHTLAYQSRVGPVEWLKPYTEEALEELGRAKTQDLVVVPISFVSEHIETLEEIDIEYRELATESGVVNFRRVRALDTYPPFISGLADLVVASLEGPEVNLDQAAELPTTVKLYPQEKWEWGWNNSSEVWNGRLAMIGFSAFLLELISGHGPLHAVGLL.

The Fe cation site is built by histidine 196 and glutamate 281.

It belongs to the ferrochelatase family.

Its subcellular location is the cytoplasm. The catalysed reaction is heme b + 2 H(+) = protoporphyrin IX + Fe(2+). Its pathway is porphyrin-containing compound metabolism; protoheme biosynthesis; protoheme from protoporphyrin-IX: step 1/1. In terms of biological role, catalyzes the ferrous insertion into protoporphyrin IX. In Synechococcus sp. (strain CC9311), this protein is Ferrochelatase.